A 633-amino-acid chain; its full sequence is DNA polymerase DpoZ (633 aa).

It belongs to the DNA polymerase type-A family. DpoZ subfamily.

The catalysed reaction is DNA(n) + a 2'-deoxyribonucleoside 5'-triphosphate = DNA(n+1) + diphosphate. It catalyses the reaction dZTP + DNA(n) = DNA(n)-Z + diphosphate. In terms of biological role, DNA polymerase that preferentially incorporates the non-canonical base aminoadenine/dZTP instead of adenine into the synthesized DNA. More efficient in using dZTP instead of dATP as a substrate. In addition to this preference for dZTP, the phage also encodes a dATP triphosphohydrolase that removes dATP and its precursor dADP from the nucleotide pool of the host. This Vibrio phage phiVC8 protein is DNA polymerase DpoZ (dpoZ).